A 319-amino-acid polypeptide reads, in one-letter code: Ankyrin repeat domain-containing protein 1 (319 aa).

A coiled-coil region spans residues 61–89; sequence KSEKQREAELKKKKLEQRSKLENLEDLEI. 5 ANK repeats span residues 152-181, 185-214, 218-247, 251-280, and 284-315; these read YKRTALHRACLEGHLAIVEKLMEAGAQIEF, LESTAIHWASRGGNLDVLKLLLNKGAKISA, LLSTALHVAVRTGHYECAEHLIACEADLNA, EGDTPLHDAVRLNRYKMIRLLIMYGADLNI, and AGKTPMDLVLHWQNGTKAIFDSLRENSYKTSR.

As to quaternary structure, interacts with YBX1. Interacts with TTN/titin. In terms of tissue distribution, mainly expressed in activated vascular endothelial cells. To a lower extent, also expressed in hepatoma cells.

The protein localises to the nucleus. May play an important role in endothelial cell activation. May act as a nuclear transcription factor that negatively regulates the expression of cardiac genes. Induction seems to be correlated with apoptotic cell death in hepatoma cells. In Homo sapiens (Human), this protein is Ankyrin repeat domain-containing protein 1 (ANKRD1).